The sequence spans 444 residues: Enolase 1 (444 aa).

2 residues coordinate substrate: histidine 165 and glutamate 174. The Proton donor role is filled by glutamate 217. Residues glutamate 303 and aspartate 330 each coordinate substrate. The Proton acceptor role is filled by lysine 355. Substrate-binding positions include serine 382–serine 385 and lysine 406.

It belongs to the enolase family. Homodimer. Requires Mg(2+) as cofactor.

It localises to the cytoplasm. It carries out the reaction (2R)-2-phosphoglycerate = phosphoenolpyruvate + H2O. Its pathway is carbohydrate degradation; glycolysis; pyruvate from D-glyceraldehyde 3-phosphate: step 4/5. This Toxoplasma gondii protein is Enolase 1 (ENO1).